We begin with the raw amino-acid sequence, 396 residues long: Putative ribosomal RNA large subunit methyltransferase YwbD (396 aa).

Positions 1–79 constitute a PUA domain; that stretch reads MKLLTLKKAH…KHEQIDQAFF (79 aa).

This sequence belongs to the methyltransferase superfamily. RlmI family.

It localises to the cytoplasm. This is Putative ribosomal RNA large subunit methyltransferase YwbD (ywbD) from Bacillus subtilis (strain 168).